A 259-amino-acid chain; its full sequence is Emerin (259 aa).

The residue at position 1 (Met1) is an N-acetylmethionine. The LEM domain maps to Met1 to Arg45. Phosphoserine is present on residues Ser8, Ser29, Ser54, Ser72, Ser88, Ser99, Ser141, and Ser142. The interaction with F-actin stretch occupies residues Arg46 to Gln223. Tyr161 is modified (phosphotyrosine). The interaction with CTNNB1 stretch occupies residues Arg168–Ser187. 3 positions are modified to phosphoserine: Ser171, Ser174, and Ser176. A helical membrane pass occupies residues Val224–Tyr244.

As to quaternary structure, interacts with lamins A and C, BANF1, GMCL, BCLAF1 and YTHDC1/YT521. Interacts with TMEM43; the interaction retains emerin in the inner nuclear membrane. Interacts with ACTB, SPTAN1, F-actin, CTNNB1 and beta-tubulin. Interacts with SUN1 and SUN2. Interacts with TMEM201. Interacts with NEMP1. As to expression, in the ovary, highest expression is seen in primordial follicle oocytes (at protein level). Detected in embryonic fibroblasts, skeletal muscle, heart muscle and tongue epithelium (at protein level). Widely expressed.

It localises to the nucleus inner membrane. The protein resides in the nucleus outer membrane. In terms of biological role, stabilizes and promotes the formation of a nuclear actin cortical network. Stimulates actin polymerization in vitro by binding and stabilizing the pointed end of growing filaments. Inhibits beta-catenin activity by preventing its accumulation in the nucleus. Acts by influencing the nuclear accumulation of beta-catenin through a CRM1-dependent export pathway. Links centrosomes to the nuclear envelope via a microtubule association. Required for proper localization of non-farnesylated prelamin-A/C. Together with NEMP1, contributes to nuclear envelope stiffness in germ cells. The polypeptide is Emerin (Emd) (Mus musculus (Mouse)).